We begin with the raw amino-acid sequence, 100 residues long: Aspartyl/glutamyl-tRNA(Asn/Gln) amidotransferase subunit C (100 aa).

It belongs to the GatC family. In terms of assembly, heterotrimer of A, B and C subunits.

It carries out the reaction L-glutamyl-tRNA(Gln) + L-glutamine + ATP + H2O = L-glutaminyl-tRNA(Gln) + L-glutamate + ADP + phosphate + H(+). The enzyme catalyses L-aspartyl-tRNA(Asn) + L-glutamine + ATP + H2O = L-asparaginyl-tRNA(Asn) + L-glutamate + ADP + phosphate + 2 H(+). In terms of biological role, allows the formation of correctly charged Asn-tRNA(Asn) or Gln-tRNA(Gln) through the transamidation of misacylated Asp-tRNA(Asn) or Glu-tRNA(Gln) in organisms which lack either or both of asparaginyl-tRNA or glutaminyl-tRNA synthetases. The reaction takes place in the presence of glutamine and ATP through an activated phospho-Asp-tRNA(Asn) or phospho-Glu-tRNA(Gln). This chain is Aspartyl/glutamyl-tRNA(Asn/Gln) amidotransferase subunit C, found in Streptococcus pyogenes serotype M49 (strain NZ131).